The following is a 347-amino-acid chain: UDP-3-O-acylglucosamine N-acyltransferase 1 (347 aa).

Histidine 246 functions as the Proton acceptor in the catalytic mechanism.

The protein belongs to the transferase hexapeptide repeat family. LpxD subfamily. As to quaternary structure, homotrimer.

The catalysed reaction is a UDP-3-O-[(3R)-3-hydroxyacyl]-alpha-D-glucosamine + a (3R)-hydroxyacyl-[ACP] = a UDP-2-N,3-O-bis[(3R)-3-hydroxyacyl]-alpha-D-glucosamine + holo-[ACP] + H(+). It functions in the pathway bacterial outer membrane biogenesis; LPS lipid A biosynthesis. Functionally, catalyzes the N-acylation of UDP-3-O-acylglucosamine using 3-hydroxyacyl-ACP as the acyl donor. Is involved in the biosynthesis of lipid A, a phosphorylated glycolipid that anchors the lipopolysaccharide to the outer membrane of the cell. This is UDP-3-O-acylglucosamine N-acyltransferase 1 from Francisella tularensis subsp. tularensis (strain SCHU S4 / Schu 4).